The sequence spans 337 residues: Phosphate acyltransferase (337 aa).

This sequence belongs to the PlsX family. Homodimer. Probably interacts with PlsY.

The protein localises to the cytoplasm. The catalysed reaction is a fatty acyl-[ACP] + phosphate = an acyl phosphate + holo-[ACP]. It functions in the pathway lipid metabolism; phospholipid metabolism. Functionally, catalyzes the reversible formation of acyl-phosphate (acyl-PO(4)) from acyl-[acyl-carrier-protein] (acyl-ACP). This enzyme utilizes acyl-ACP as fatty acyl donor, but not acyl-CoA. The protein is Phosphate acyltransferase of Acidobacterium capsulatum (strain ATCC 51196 / DSM 11244 / BCRC 80197 / JCM 7670 / NBRC 15755 / NCIMB 13165 / 161).